Here is a 228-residue protein sequence, read N- to C-terminus: Octanoyltransferase (228 aa).

The BPL/LPL catalytic domain occupies 40 to 225 (GEEAERVWLV…SFERVFDAAP (186 aa)). Substrate-binding positions include 79–86 (RGGQWTYH), 156–158 (AIG), and 169–171 (GIA). The active-site Acyl-thioester intermediate is Cys-187.

It belongs to the LipB family.

The protein resides in the cytoplasm. It carries out the reaction octanoyl-[ACP] + L-lysyl-[protein] = N(6)-octanoyl-L-lysyl-[protein] + holo-[ACP] + H(+). Its pathway is protein modification; protein lipoylation via endogenous pathway; protein N(6)-(lipoyl)lysine from octanoyl-[acyl-carrier-protein]: step 1/2. Catalyzes the transfer of endogenously produced octanoic acid from octanoyl-acyl-carrier-protein onto the lipoyl domains of lipoate-dependent enzymes. Lipoyl-ACP can also act as a substrate although octanoyl-ACP is likely to be the physiological substrate. The sequence is that of Octanoyltransferase from Acidiphilium cryptum (strain JF-5).